The chain runs to 812 residues: DNA translocase FtsK 1 (812 aa).

Residues 1–11 (MTEKSHKKTAK) show a composition bias toward basic residues. The segment at 1 to 36 (MTEKSHKKTAKGRAGSPSPTSARNKKADNGARGNKV) is disordered. Basic and acidic residues predominate over residues 25-36 (KKADNGARGNKV). Helical transmembrane passes span 63-83 (IGDA…ISLI), 116-136 (VGYY…CVML), 156-176 (IAAA…YFVL), 184-204 (LPVG…AWLL), and 210-230 (LLII…ISWL). Over 231–812 (EFLNGAGRAV…RKILAHKDHL (582 aa)) the chain is Cytoplasmic. Residues 461 to 670 (GTPVVGDLAK…FTVQSKIDSR (210 aa)) form the FtsK domain. ATP is bound at residue 481–486 (GSGKSV).

The protein belongs to the FtsK/SpoIIIE/SftA family. Homohexamer. Forms a ring that surrounds DNA.

It localises to the cell inner membrane. Functionally, essential cell division protein that coordinates cell division and chromosome segregation. The N-terminus is involved in assembly of the cell-division machinery. The C-terminus functions as a DNA motor that moves dsDNA in an ATP-dependent manner towards the dif recombination site, which is located within the replication terminus region. Translocation stops specifically at Xer-dif sites, where FtsK interacts with the Xer recombinase, allowing activation of chromosome unlinking by recombination. FtsK orienting polar sequences (KOPS) guide the direction of DNA translocation. FtsK can remove proteins from DNA as it translocates, but translocation stops specifically at XerCD-dif site, thereby preventing removal of XerC and XerD from dif. This chain is DNA translocase FtsK 1 (ftsK1), found in Neisseria meningitidis serogroup A / serotype 4A (strain DSM 15465 / Z2491).